Here is a 590-residue protein sequence, read N- to C-terminus: Threonine dehydratase biosynthetic, chloroplastic (590 aa).

The N-terminal 44 residues, 1–44 (MLSTSTTNSSILPFRSRASSSTFIARPPANFNSIFTTSVRVFPI), are a transit peptide targeting the chloroplast. The residue at position 139 (K139) is an N6-(pyridoxal phosphate)lysine. 2 consecutive ACT-like domains span residues 416–488 (ALLG…NISH) and 509–580 (EVFV…IDQY).

This sequence belongs to the serine/threonine dehydratase family. Pyridoxal 5'-phosphate serves as cofactor. Found at higher levels in flowers than in other organs.

The protein localises to the plastid. It localises to the chloroplast. The catalysed reaction is L-threonine = 2-oxobutanoate + NH4(+). The protein operates within amino-acid biosynthesis; L-isoleucine biosynthesis; 2-oxobutanoate from L-threonine: step 1/1. With respect to regulation, allosterically inhibited by isoleucine. The sequence is that of Threonine dehydratase biosynthetic, chloroplastic from Cicer arietinum (Chickpea).